The sequence spans 184 residues: Photosystem I assembly protein Ycf4 (184 aa).

Helical transmembrane passes span 22–42 (FCWAVILFLGSLGFLLVGTSS) and 57–77 (ILFFPQGIVMSFYGIAGLFIS).

This sequence belongs to the Ycf4 family.

Its subcellular location is the plastid. It localises to the chloroplast thylakoid membrane. In terms of biological role, seems to be required for the assembly of the photosystem I complex. This Panax ginseng (Korean ginseng) protein is Photosystem I assembly protein Ycf4.